A 450-amino-acid chain; its full sequence is Bifunctional protein GlmU (450 aa).

The interval 1–226 (MLAVAVLAAG…PDEVNGINNR (226 aa)) is pyrophosphorylase. UDP-N-acetyl-alpha-D-glucosamine contacts are provided by residues 7–10 (LAAG), Lys-21, Gln-73, and 78–79 (GT). Asp-103 provides a ligand contact to Mg(2+). Gly-140, Glu-155, Asn-170, and Asn-224 together coordinate UDP-N-acetyl-alpha-D-glucosamine. Mg(2+) is bound at residue Asn-224. The tract at residues 227–247 (KQLAQCEGVLQQRLRDYWMDE) is linker. The segment at 248 to 450 (GVTFVDPASC…TKDNWANRSI (203 aa)) is N-acetyltransferase. Arg-329 and Lys-347 together coordinate UDP-N-acetyl-alpha-D-glucosamine. His-359 (proton acceptor) is an active-site residue. 2 residues coordinate UDP-N-acetyl-alpha-D-glucosamine: Tyr-362 and Asn-373. Acetyl-CoA-binding positions include Ala-376, 382–383 (NY), Ala-419, and Arg-436.

The protein in the N-terminal section; belongs to the N-acetylglucosamine-1-phosphate uridyltransferase family. In the C-terminal section; belongs to the transferase hexapeptide repeat family. Homotrimer. The cofactor is Mg(2+).

It localises to the cytoplasm. The enzyme catalyses alpha-D-glucosamine 1-phosphate + acetyl-CoA = N-acetyl-alpha-D-glucosamine 1-phosphate + CoA + H(+). It catalyses the reaction N-acetyl-alpha-D-glucosamine 1-phosphate + UTP + H(+) = UDP-N-acetyl-alpha-D-glucosamine + diphosphate. The protein operates within nucleotide-sugar biosynthesis; UDP-N-acetyl-alpha-D-glucosamine biosynthesis; N-acetyl-alpha-D-glucosamine 1-phosphate from alpha-D-glucosamine 6-phosphate (route II): step 2/2. It participates in nucleotide-sugar biosynthesis; UDP-N-acetyl-alpha-D-glucosamine biosynthesis; UDP-N-acetyl-alpha-D-glucosamine from N-acetyl-alpha-D-glucosamine 1-phosphate: step 1/1. It functions in the pathway bacterial outer membrane biogenesis; LPS lipid A biosynthesis. Its function is as follows. Catalyzes the last two sequential reactions in the de novo biosynthetic pathway for UDP-N-acetylglucosamine (UDP-GlcNAc). The C-terminal domain catalyzes the transfer of acetyl group from acetyl coenzyme A to glucosamine-1-phosphate (GlcN-1-P) to produce N-acetylglucosamine-1-phosphate (GlcNAc-1-P), which is converted into UDP-GlcNAc by the transfer of uridine 5-monophosphate (from uridine 5-triphosphate), a reaction catalyzed by the N-terminal domain. In Synechococcus sp. (strain CC9902), this protein is Bifunctional protein GlmU.